A 127-amino-acid chain; its full sequence is Small ribosomal subunit protein uS13 (127 aa).

The tract at residues 95–127 (GLPLRGQRTKTNARTRRGKKGAAIGGKKKATKK) is disordered.

The protein belongs to the universal ribosomal protein uS13 family. Part of the 30S ribosomal subunit. Forms a loose heterodimer with protein S19. Forms two bridges to the 50S subunit in the 70S ribosome.

Functionally, located at the top of the head of the 30S subunit, it contacts several helices of the 16S rRNA. In the 70S ribosome it contacts the 23S rRNA (bridge B1a) and protein L5 of the 50S subunit (bridge B1b), connecting the 2 subunits; these bridges are implicated in subunit movement. Contacts the tRNAs in the A and P-sites. This Herpetosiphon aurantiacus (strain ATCC 23779 / DSM 785 / 114-95) protein is Small ribosomal subunit protein uS13.